A 351-amino-acid chain; its full sequence is Biotin synthase (351 aa).

One can recognise a Radical SAM core domain in the interval 48–265 (NKVRIHILDN…LCMFRLINPD (218 aa)). [4Fe-4S] cluster contacts are provided by Cys-63, Cys-67, and Cys-70. Residues Cys-107, Cys-139, Cys-199, and Arg-269 each contribute to the [2Fe-2S] cluster site.

Belongs to the radical SAM superfamily. Biotin synthase family. As to quaternary structure, homodimer. The cofactor is [4Fe-4S] cluster. [2Fe-2S] cluster is required as a cofactor.

The catalysed reaction is (4R,5S)-dethiobiotin + (sulfur carrier)-SH + 2 reduced [2Fe-2S]-[ferredoxin] + 2 S-adenosyl-L-methionine = (sulfur carrier)-H + biotin + 2 5'-deoxyadenosine + 2 L-methionine + 2 oxidized [2Fe-2S]-[ferredoxin]. Its pathway is cofactor biosynthesis; biotin biosynthesis; biotin from 7,8-diaminononanoate: step 2/2. Catalyzes the conversion of dethiobiotin (DTB) to biotin by the insertion of a sulfur atom into dethiobiotin via a radical-based mechanism. The sequence is that of Biotin synthase from Leptospira interrogans serogroup Icterohaemorrhagiae serovar copenhageni (strain Fiocruz L1-130).